The sequence spans 508 residues: BICD family-like cargo adapter 2 (508 aa).

Residues 1–22 (MSSPDGPSFPSGPLSGGASPSG) show a composition bias toward low complexity. 3 disordered regions span residues 1 to 27 (MSSP…EGFF), 132 to 152 (LGEQ…ALSE), and 300 to 351 (AHSL…TSLS). Coiled-coil stretches lie at residues 64–300 (AAEL…SELA) and 353–458 (AEIL…DMQV). The span at 135–149 (QRSEQQDSGRERARA) shows a compositional bias: basic and acidic residues. A disordered region spans residues 470–491 (KELSASASSSTPRRAAPRFSLR). The span at 473–489 (SASASSSTPRRAAPRFS) shows a compositional bias: low complexity.

This sequence belongs to the BICDR family. In terms of assembly, interacts with RAB13.

The protein is BICD family-like cargo adapter 2 (BICDL2) of Homo sapiens (Human).